The sequence spans 236 residues: Small ribosomal subunit protein eS6 (236 aa).

Belongs to the eukaryotic ribosomal protein eS6 family. Component of the small ribosomal subunit. Mature ribosomes consist of a small (40S) and a large (60S) subunit. The 40S subunit contains about 32 different proteins and 1 molecule of RNA (18S). The 60S subunit contains 45 different proteins and 3 molecules of RNA (25S, 5.8S and 5S).

The protein localises to the cytoplasm. Functionally, component of the ribosome, a large ribonucleoprotein complex responsible for the synthesis of proteins in the cell. The small ribosomal subunit (SSU) binds messenger RNAs (mRNAs) and translates the encoded message by selecting cognate aminoacyl-transfer RNA (tRNA) molecules. The large subunit (LSU) contains the ribosomal catalytic site termed the peptidyl transferase center (PTC), which catalyzes the formation of peptide bonds, thereby polymerizing the amino acids delivered by tRNAs into a polypeptide chain. The nascent polypeptides leave the ribosome through a tunnel in the LSU and interact with protein factors that function in enzymatic processing, targeting, and the membrane insertion of nascent chains at the exit of the ribosomal tunnel. RPS6A is involved in nucleolar processing of pre-18S ribosomal RNA and ribosome assembly. The sequence is that of Small ribosomal subunit protein eS6 (RPS6A) from Candida albicans (strain SC5314 / ATCC MYA-2876) (Yeast).